The sequence spans 213 residues: Protein big brother (213 aa).

Belongs to the CBF-beta family.

It localises to the nucleus. Regulates the DNA-binding properties of Runt. The sequence is that of Protein big brother (Bgb) from Drosophila melanogaster (Fruit fly).